A 207-amino-acid polypeptide reads, in one-letter code: Large ribosomal subunit protein uL4 (207 aa).

Residues 49–78 are disordered; that stretch reads HAVKNRSAVSGGGRKPWRQKGTGRARQGSI.

This sequence belongs to the universal ribosomal protein uL4 family. As to quaternary structure, part of the 50S ribosomal subunit.

In terms of biological role, one of the primary rRNA binding proteins, this protein initially binds near the 5'-end of the 23S rRNA. It is important during the early stages of 50S assembly. It makes multiple contacts with different domains of the 23S rRNA in the assembled 50S subunit and ribosome. Forms part of the polypeptide exit tunnel. In Streptococcus gordonii (strain Challis / ATCC 35105 / BCRC 15272 / CH1 / DL1 / V288), this protein is Large ribosomal subunit protein uL4.